Consider the following 325-residue polypeptide: Probable transcription factor At4g01260 (325 aa).

The disordered stretch occupies residues 1–98; sequence MAPKQLKKIE…SMGEEDVKKK (98 aa). Composition is skewed to low complexity over residues 23-32 and 49-69; these read ASSGESATSG and KPVV…ESST. Basic and acidic residues predominate over residues 73–83; it reads RSFEKTDEMSK.

The protein belongs to the GeBP family.

In Arabidopsis thaliana (Mouse-ear cress), this protein is Probable transcription factor At4g01260.